The chain runs to 236 residues: Mitochondrial coenzyme A diphosphatase NUDT8 (236 aa).

Positions 25-172 (LRARPASAAV…HFRYTLPVFL (148 aa)) constitute a Nudix hydrolase domain. Lysine 70 is subject to N6-succinyllysine. The short motif at 70–91 (KCDPADQDVVHTALRETREELG) is the Nudix box element. 2 residues coordinate Mg(2+): glutamate 85 and glutamate 89.

It belongs to the Nudix hydrolase family. As to quaternary structure, monomer. Mg(2+) is required as a cofactor. Requires Mn(2+) as cofactor.

It localises to the mitochondrion. It carries out the reaction an acyl-CoA + H2O = an acyl-4'-phosphopantetheine + adenosine 3',5'-bisphosphate + 2 H(+). The catalysed reaction is CoA + H2O = (R)-4'-phosphopantetheine + adenosine 3',5'-bisphosphate + 2 H(+). The enzyme catalyses acetyl-CoA + H2O = S-acetyl-4'-phosphopantetheine + adenosine 3',5'-bisphosphate + 2 H(+). It catalyses the reaction butanoyl-CoA + H2O = S-butanoyl-4'-phosphopantetheine + adenosine 3',5'-bisphosphate + 2 H(+). It carries out the reaction hexanoyl-CoA + H2O = hexanoyl-4'-phosphopantetheine + adenosine 3',5'-bisphosphate + 2 H(+). The catalysed reaction is octanoyl-CoA + H2O = S-octanoyl-4'-phosphopantetheine + adenosine 3',5'-bisphosphate + 2 H(+). The enzyme catalyses propanoyl-CoA + H2O = propanoyl-4'-phosphopantetheine + adenosine 3',5'-bisphosphate + 2 H(+). It catalyses the reaction malonyl-CoA + H2O = malonyl-4'-phosphopantetheine + adenosine 3',5'-bisphosphate + 2 H(+). It carries out the reaction succinyl-CoA + H2O = succinyl-4'-phosphopantetheine + adenosine 3',5'-bisphosphate + 2 H(+). The catalysed reaction is a 5'-end CoA-ribonucleoside in mRNA + H2O = a 5'-end phospho-adenosine-phospho-ribonucleoside in mRNA + (R)-4'-phosphopantetheine + 2 H(+). Its function is as follows. Acyl-CoA diphosphatase that mediates the hydrolysis of a wide range of CoA and CoA esters yielding 3',5'-ADP and the corresponding 4'-phosphopantetheine derivative as products. Hydrolyzes short- and medium-chain acyl-CoAs, exhibiting the highest activity toward free CoA, hexanoyl-CoA, and octanoyl-CoA and the lowest activity against acetyl-CoA. Exhibits decapping activity towards dpCoA-capped RNAs in vitro. This Homo sapiens (Human) protein is Mitochondrial coenzyme A diphosphatase NUDT8 (NUDT8).